The primary structure comprises 517 residues: ATP synthase subunit alpha 2 (517 aa).

Gly-173 to Thr-180 provides a ligand contact to ATP.

The protein belongs to the ATPase alpha/beta chains family. As to quaternary structure, F-type ATPases have 2 components, CF(1) - the catalytic core - and CF(0) - the membrane proton channel. CF(1) has five subunits: alpha(3), beta(3), gamma(1), delta(1), epsilon(1). CF(0) has three main subunits: a(1), b(2) and c(9-12). The alpha and beta chains form an alternating ring which encloses part of the gamma chain. CF(1) is attached to CF(0) by a central stalk formed by the gamma and epsilon chains, while a peripheral stalk is formed by the delta and b chains.

The protein resides in the cell inner membrane. The enzyme catalyses ATP + H2O + 4 H(+)(in) = ADP + phosphate + 5 H(+)(out). Produces ATP from ADP in the presence of a proton gradient across the membrane. The alpha chain is a regulatory subunit. This is ATP synthase subunit alpha 2 from Legionella pneumophila (strain Corby).